A 740-amino-acid polypeptide reads, in one-letter code: Putative Pol polyprotein from transposon element Bs1 (740 aa).

Residues 469–503 form a PPR repeat; that stretch reads TAVAHNLLVQALFMDGRASDAYVVLEEMQNNGPFP.

Bs1 is probably an active plant retrotransposon. The sequence is that of Putative Pol polyprotein from transposon element Bs1 from Zea mays (Maize).